Reading from the N-terminus, the 342-residue chain is Methylthioribose-1-phosphate isomerase (342 aa).

Residues 44 to 46, Arg85, and Gln192 each bind substrate; that span reads RGA. Asp233 functions as the Proton donor in the catalytic mechanism. Residue 243 to 244 participates in substrate binding; it reads NK.

The protein belongs to the eIF-2B alpha/beta/delta subunits family. MtnA subfamily.

It carries out the reaction 5-(methylsulfanyl)-alpha-D-ribose 1-phosphate = 5-(methylsulfanyl)-D-ribulose 1-phosphate. It participates in amino-acid biosynthesis; L-methionine biosynthesis via salvage pathway; L-methionine from S-methyl-5-thio-alpha-D-ribose 1-phosphate: step 1/6. Its function is as follows. Catalyzes the interconversion of methylthioribose-1-phosphate (MTR-1-P) into methylthioribulose-1-phosphate (MTRu-1-P). The chain is Methylthioribose-1-phosphate isomerase from Caldicellulosiruptor saccharolyticus (strain ATCC 43494 / DSM 8903 / Tp8T 6331).